The chain runs to 208 residues: Thymidylate kinase (208 aa).

An ATP-binding site is contributed by glycine 10–threonine 17.

It belongs to the thymidylate kinase family.

It catalyses the reaction dTMP + ATP = dTDP + ADP. In terms of biological role, phosphorylation of dTMP to form dTDP in both de novo and salvage pathways of dTTP synthesis. In Ligilactobacillus salivarius (strain UCC118) (Lactobacillus salivarius), this protein is Thymidylate kinase.